The chain runs to 366 residues: Heat-inducible transcription repressor HrcA (366 aa).

Polar residues predominate over residues 298–309 (SSGYGQSSTPSA). A disordered region spans residues 298–318 (SSGYGQSSTPSANVEHEEYDT).

It belongs to the HrcA family.

In terms of biological role, negative regulator of class I heat shock genes (grpE-dnaK-dnaJ and groELS operons). Prevents heat-shock induction of these operons. This chain is Heat-inducible transcription repressor HrcA, found in Bifidobacterium animalis subsp. lactis (strain AD011).